The following is a 335-amino-acid chain: Cut9-interacting protein scn1 (335 aa).

This sequence belongs to the metallo-dependent hydrolases superfamily.

Interacts with cut9. The protein is Cut9-interacting protein scn1 (scn1) of Schizosaccharomyces pombe (strain 972 / ATCC 24843) (Fission yeast).